Consider the following 807-residue polypeptide: Zinc finger protein 594 (807 aa).

The interval 1-23 is disordered; it reads MKEWKSKMEISEEKKSARAASEK. 8 C2H2-type zinc fingers span residues 127-149, 155-177, 183-205, 211-233, 239-261, 267-289, 295-317, and 323-345; these read YECK…QRIH, YVCN…QRIH, YICH…KQIH, YLCN…HRIH, YECY…QRIH, LKCN…QRLH, and YECH…QRLH. The segment at 348-370 adopts a C2H2-type 9; degenerate zinc-finger fold; the sequence is EKIEECEKTFSKDEELREEQRIH. C2H2-type zinc fingers lie at residues 376–398, 404–426, 432–454, 460–482, 488–510, and 516–538; these read YWCN…QVTH, YECK…HRIH, CVCS…HRVH, YECS…QKIH, YQCT…RRIH, and YECK…QSLH. The C2H2-type 16; degenerate zinc-finger motif lies at 543 to 562; it reads LECEKTFSQDEELRGEQKIH. C2H2-type zinc fingers lie at residues 568–590, 596–618, 624–646, 652–674, 680–702, and 708–730; these read YWCN…QVTH, YECK…HRIH, YVCN…HRIH, YECS…QKIH, YQCS…RRLH, and YECK…QRLH. The C2H2-type 23; degenerate zinc-finger motif lies at 733-755; the sequence is EKLEECEKTFSKDEELRKEQRTH. The C2H2-type 24 zinc-finger motif lies at 761–783; that stretch reads YWCNQCSRTFQGSSDLIRHQVTH.

Belongs to the krueppel C2H2-type zinc-finger protein family.

It localises to the nucleus. May be involved in transcriptional regulation. The chain is Zinc finger protein 594 (ZNF594) from Homo sapiens (Human).